Here is a 125-residue protein sequence, read N- to C-terminus: Small ribosomal subunit protein uS13 (125 aa).

The protein belongs to the universal ribosomal protein uS13 family. In terms of assembly, part of the 30S ribosomal subunit. Forms a loose heterodimer with protein S19. Forms two bridges to the 50S subunit in the 70S ribosome.

Located at the top of the head of the 30S subunit, it contacts several helices of the 16S rRNA. In the 70S ribosome it contacts the 23S rRNA (bridge B1a) and protein L5 of the 50S subunit (bridge B1b), connecting the 2 subunits; these bridges are implicated in subunit movement. Contacts the tRNAs in the A and P-sites. This is Small ribosomal subunit protein uS13 from Gluconobacter oxydans (strain 621H) (Gluconobacter suboxydans).